The primary structure comprises 108 residues: Gibberellin-regulated protein 7 (108 aa).

An N-terminal signal peptide occupies residues Met-1–Ala-23.

Belongs to the GASA family. Six disulfide bonds may be present.

It is found in the secreted. In terms of biological role, gibberellin-regulated protein that may function in hormonal controlled steps of development such as seed germination, flowering and seed maturation. This Arabidopsis thaliana (Mouse-ear cress) protein is Gibberellin-regulated protein 7 (GASA7).